A 241-amino-acid chain; its full sequence is Phycocyanobilin:ferredoxin oxidoreductase (241 aa).

It belongs to the HY2 family.

It catalyses the reaction (2R,3Z)-phycocyanobilin + 4 oxidized [2Fe-2S]-[ferredoxin] = biliverdin IXalpha + 4 reduced [2Fe-2S]-[ferredoxin] + 4 H(+). Its function is as follows. Catalyzes the four-electron reduction of biliverdin IX-alpha (2-electron reduction at both the A and D rings); the reaction proceeds via an isolatable 2-electron intermediate, 181,182-dihydrobiliverdin. This is Phycocyanobilin:ferredoxin oxidoreductase from Prochlorococcus marinus (strain MIT 9215).